The primary structure comprises 292 residues: Putative FNIP repeat-containing protein L281 (292 aa).

The stretch at 95-134 (FNKSIDDIPSTITHLSLGAAFNGEVSNIPTSVTHLKLGVS) is one FNIP repeat.

The protein is Putative FNIP repeat-containing protein L281 of Acanthamoeba polyphaga mimivirus (APMV).